Here is a 469-residue protein sequence, read N- to C-terminus: Glutamate--tRNA ligase (469 aa).

Residues 9–19 (PSPTGFLHVGG) carry the 'HIGH' region motif. Zn(2+) is bound by residues Cys-98, Cys-100, Cys-125, and Asp-127. Positions 236–240 (KLSKR) match the 'KMSKS' region motif. Position 239 (Lys-239) interacts with ATP.

Belongs to the class-I aminoacyl-tRNA synthetase family. Glutamate--tRNA ligase type 1 subfamily. As to quaternary structure, monomer. It depends on Zn(2+) as a cofactor.

The protein localises to the cytoplasm. It catalyses the reaction tRNA(Glu) + L-glutamate + ATP = L-glutamyl-tRNA(Glu) + AMP + diphosphate. Functionally, catalyzes the attachment of glutamate to tRNA(Glu) in a two-step reaction: glutamate is first activated by ATP to form Glu-AMP and then transferred to the acceptor end of tRNA(Glu). This is Glutamate--tRNA ligase from Shewanella baltica (strain OS155 / ATCC BAA-1091).